Consider the following 300-residue polypeptide: MTTEHKSGFVAIVGRPNVGKSTLLNRIVGQKIAIMSDKAQTTRNKIQGIYTIPEAQIVFIDTPGIHKPKHRLGDFMVESAYNAMREVDATLFMVSADQKRGKGDDFIIERLKNNNSPVYLIINKIDKVHPDDLLSIIEDYSKQMDFKEIIPISATEGNNFEHLMDVLVEQMPEGPQYFPDDQITDHPEYFIVSELIREKVLLLTRDEIPHSVAVVVDSMKRDENDKVHVQATIIVERDSQKGIIIGKGGKMLKQIGTKARQDIEYLLDDKVYLELWVKVQKDWRDKKIYLQDFGYRKEEY.

The region spanning 6–173 is the Era-type G domain; that stretch reads KSGFVAIVGR…MDVLVEQMPE (168 aa). Residues 14-21 form a G1 region; the sequence is GRPNVGKS. 14–21 contributes to the GTP binding site; the sequence is GRPNVGKS. The interval 40 to 44 is G2; the sequence is QTTRN. The interval 61–64 is G3; it reads DTPG. Residues 61–65 and 123–126 contribute to the GTP site; these read DTPGI and NKID. Residues 123–126 form a G4 region; sequence NKID. Residues 152 to 154 are G5; it reads ISA. Positions 204-281 constitute a KH type-2 domain; sequence TRDEIPHSVA…YLELWVKVQK (78 aa).

It belongs to the TRAFAC class TrmE-Era-EngA-EngB-Septin-like GTPase superfamily. Era GTPase family. Monomer.

It localises to the cytoplasm. The protein localises to the cell membrane. An essential GTPase that binds both GDP and GTP, with rapid nucleotide exchange. Plays a role in 16S rRNA processing and 30S ribosomal subunit biogenesis and possibly also in cell cycle regulation and energy metabolism. This chain is GTPase Era, found in Enterococcus faecalis (strain ATCC 700802 / V583).